A 409-amino-acid polypeptide reads, in one-letter code: Serine/threonine transporter SstT (409 aa).

9 consecutive transmembrane segments (helical) span residues 24-44, 48-68, 82-102, 142-162, 194-214, 218-238, 292-312, 319-339, and 365-385; these read LALG…AGLF, FVGA…AATI, IIVL…IAGM, AIAN…GAAL, LGIF…ALAG, LLAV…PAIV, IPLG…VLAM, GIQV…VSAC, and VAMQ…SAET.

This sequence belongs to the dicarboxylate/amino acid:cation symporter (DAACS) (TC 2.A.23) family.

It is found in the cell inner membrane. The catalysed reaction is L-serine(in) + Na(+)(in) = L-serine(out) + Na(+)(out). It catalyses the reaction L-threonine(in) + Na(+)(in) = L-threonine(out) + Na(+)(out). Functionally, involved in the import of serine and threonine into the cell, with the concomitant import of sodium (symport system). This Neisseria meningitidis serogroup C (strain 053442) protein is Serine/threonine transporter SstT.